The primary structure comprises 369 residues: ATP-dependent (S)-NAD(P)H-hydrate dehydratase (369 aa).

The YjeF C-terminal domain occupies 14 to 356 (LFQKARKLVP…DEVHESFLTL (343 aa)). Residues Gly-126 and 179–185 (NVNEFSR) contribute to the (6S)-NADPHX site. ATP contacts are provided by residues 231 to 235 (KGPHD) and 250 to 259 (GGLKRSGGQG). Asp-260 is a binding site for (6S)-NADPHX. Positions 284–306 (GEQEHSKEAENKEEVQGELESNK) are enriched in basic and acidic residues. Positions 284–307 (GEQEHSKEAENKEEVQGELESNKR) are disordered.

This sequence belongs to the NnrD/CARKD family. It depends on Mg(2+) as a cofactor.

The protein resides in the cytoplasm. It catalyses the reaction (6S)-NADHX + ATP = ADP + phosphate + NADH + H(+). The catalysed reaction is (6S)-NADPHX + ATP = ADP + phosphate + NADPH + H(+). In terms of biological role, catalyzes the dehydration of the S-form of NAD(P)HX at the expense of ATP, which is converted to ADP. Together with NAD(P)HX epimerase, which catalyzes the epimerization of the S- and R-forms, the enzyme allows the repair of both epimers of NAD(P)HX, a damaged form of NAD(P)H that is a result of enzymatic or heat-dependent hydration. The polypeptide is ATP-dependent (S)-NAD(P)H-hydrate dehydratase (Emericella nidulans (strain FGSC A4 / ATCC 38163 / CBS 112.46 / NRRL 194 / M139) (Aspergillus nidulans)).